The chain runs to 500 residues: Probable cytosol aminopeptidase (500 aa).

Lys264 and Asp269 together coordinate Mn(2+). Lys276 is an active-site residue. Residues Asp287, Asp346, and Glu348 each coordinate Mn(2+). The active site involves Arg350.

Belongs to the peptidase M17 family. Mn(2+) is required as a cofactor.

The protein localises to the cytoplasm. It catalyses the reaction Release of an N-terminal amino acid, Xaa-|-Yaa-, in which Xaa is preferably Leu, but may be other amino acids including Pro although not Arg or Lys, and Yaa may be Pro. Amino acid amides and methyl esters are also readily hydrolyzed, but rates on arylamides are exceedingly low.. It carries out the reaction Release of an N-terminal amino acid, preferentially leucine, but not glutamic or aspartic acids.. Presumably involved in the processing and regular turnover of intracellular proteins. Catalyzes the removal of unsubstituted N-terminal amino acids from various peptides. The polypeptide is Probable cytosol aminopeptidase (Chlamydia abortus (strain DSM 27085 / S26/3) (Chlamydophila abortus)).